Here is an 885-residue protein sequence, read N- to C-terminus: MQTADIRNAWLTYFGDRGHTVVPSASLVSDDPTLLFTVAGMVPFVPYLTGVVPAPFPRATSVQKCIRTLDIEEVGRTPRHGTFFQMNGNFSFGDYFKEQAIAYAWELLTTSEADGGLGFSPDDLWVTVYHEDDEARQAWKRIAGLPDERIQGLGRDTNYWHTGQPGPAGPCSEIFFDRGPAYGADGGPATDDDRYVEIWNLVFMQYLRGAGTGKSDFEILGDLPKKNIDTGMGLERVAFLKQGVENMYEIDQVRPVLDRAAELSGRRYGADHEDDVRMRIVADHVRSSLMLMSDGVRPSNEGRGYILRRLMRRTVRAMRLMGVDAATFGELFPASRDAMKAAYPEVSDDFDRISRLAYAEEETFLRTLSGGTTILDVAVGETKAKGGERIAGDTAFLLHDTFGFPIDLTLEMAEENGLTVDREAFDRLMLEQRTRAKADAKSKKTALADLTVYSEFRAAGETRFTGYDELETGTTILGLIVGGRSVDHAVAGDIAEVILPETSLYAESGGQEADAGSIVGQGFDLEVLDVQKPVKGLISHRVQVRSGEVGVGDAATTVVDADWRRGATQAHSGTHLVHAALRQVLGQDAHQSGSYNRAGYMRLDFAWNQALSSETRSEIEDIANGAVRDDLRVVTRVMPIDEAKQLGAMALFGEKYGDTVRVVDIGGPWSRELCAGTHVSSSAQIGLINVVGESSVGSTNRRIESLVGREAFQDLAVERAIVSQLTSTLKTPREQLPDRIADLMQNLKTAERRIADFEAQALQQRVPALLAQGSRVGAVTLIQESLGAVRSADEVRQLVTLVRERAGSEPVVVALAGDAGGKPTVIVATNQAARDAGAKAGQLARAAAAVLGGGGGGKDDLAQGGGSDVSAIGDALTAVRQALAS.

The Zn(2+) site is built by His571, His575, Cys674, and His678.

This sequence belongs to the class-II aminoacyl-tRNA synthetase family. The cofactor is Zn(2+).

The protein localises to the cytoplasm. It catalyses the reaction tRNA(Ala) + L-alanine + ATP = L-alanyl-tRNA(Ala) + AMP + diphosphate. Its function is as follows. Catalyzes the attachment of alanine to tRNA(Ala) in a two-step reaction: alanine is first activated by ATP to form Ala-AMP and then transferred to the acceptor end of tRNA(Ala). Also edits incorrectly charged Ser-tRNA(Ala) and Gly-tRNA(Ala) via its editing domain. The sequence is that of Alanine--tRNA ligase from Clavibacter michiganensis subsp. michiganensis (strain NCPPB 382).